We begin with the raw amino-acid sequence, 526 residues long: Probable feruloyl esterase B-2 (526 aa).

Positions 1-18 (MTKLSLLPLLTLASAVLA) are cleaved as a signal peptide. Intrachain disulfides connect Cys27–Cys74 and Cys62–Cys113. Asn52 is a glycosylation site (N-linked (GlcNAc...) asparagine). The N-linked (GlcNAc...) asparagine glycan is linked to Asn137. 4 disulfides stabilise this stretch: Cys186-Cys441, Cys255-Cys272, Cys281-Cys291, and Cys503-Cys525. The active-site Acyl-ester intermediate is Ser187. The N-linked (GlcNAc...) asparagine glycan is linked to Asn233. Positions 256, 259, 261, 263, and 265 each coordinate Ca(2+). Residues Asp400 and His440 each act as charge relay system in the active site. An N-linked (GlcNAc...) asparagine glycan is attached at Asn516.

It belongs to the tannase family.

The protein resides in the secreted. It catalyses the reaction feruloyl-polysaccharide + H2O = ferulate + polysaccharide.. Involved in degradation of plant cell walls. Hydrolyzes the feruloyl-arabinose ester bond in arabinoxylans as well as the feruloyl-galactose and feruloyl-arabinose ester bonds in pectin. The sequence is that of Probable feruloyl esterase B-2 (faeB-2) from Aspergillus fumigatus (strain ATCC MYA-4609 / CBS 101355 / FGSC A1100 / Af293) (Neosartorya fumigata).